Here is a 291-residue protein sequence, read N- to C-terminus: uncharacterized protein (291 aa).

NAD(+)-binding positions include 5 to 19 (AFIG…MAGH) and Thr-97. Lys-172 is an active-site residue. NAD(+) is bound at residue Lys-240.

The protein belongs to the HIBADH-related family.

This is an uncharacterized protein from Shewanella frigidimarina (strain NCIMB 400).